The following is a 260-amino-acid chain: 3'-5' ssDNA/RNA exonuclease TatD (260 aa).

A divalent metal cation-binding residues include E92, H128, and H153.

It belongs to the metallo-dependent hydrolases superfamily. TatD-type hydrolase family. TatD subfamily. In terms of assembly, monomer. Mg(2+) serves as cofactor.

The protein resides in the cytoplasm. Functionally, 3'-5' exonuclease that prefers single-stranded DNA and RNA. May play a role in the H(2)O(2)-induced DNA damage repair. This is 3'-5' ssDNA/RNA exonuclease TatD from Pantoea vagans (strain C9-1) (Pantoea agglomerans (strain C9-1)).